We begin with the raw amino-acid sequence, 637 residues long: Biosynthetic arginine decarboxylase (637 aa).

Lys101 carries the N6-(pyridoxal phosphate)lysine modification. 286–296 (FDVGGGLAVDY) contributes to the substrate binding site.

It belongs to the Orn/Lys/Arg decarboxylase class-II family. SpeA subfamily. Mg(2+) is required as a cofactor. It depends on pyridoxal 5'-phosphate as a cofactor.

The enzyme catalyses L-arginine + H(+) = agmatine + CO2. It functions in the pathway amine and polyamine biosynthesis; agmatine biosynthesis; agmatine from L-arginine: step 1/1. In terms of biological role, catalyzes the biosynthesis of agmatine from arginine. This Shewanella halifaxensis (strain HAW-EB4) protein is Biosynthetic arginine decarboxylase.